Reading from the N-terminus, the 575-residue chain is Transcription factor COE2 (575 aa).

The interaction with DNA stretch occupies residues 62 to 65 (RKSN). A C5-type zinc finger spans residues 150-169 (CRVLLTHEVMCSRCCEKKSC). Interaction with DNA stretches follow at residues 196–203 (NCLKTAGN) and 235–238 (NNSK). Residues 253–336 (PCIKAISPSE…KGAPGRFIYT (84 aa)) enclose the IPT/TIG domain. A compositionally biased stretch (polar residues) spans 441–453 (STQGNNQGYIRNT). The interval 441–479 (STQGNNQGYIRNTSSISPRGYSSSSTPQQSNYSTSSNSM) is disordered. Low complexity predominate over residues 454 to 479 (SSISPRGYSSSSTPQQSNYSTSSNSM).

Belongs to the COE family. In terms of assembly, forms either a homodimer or a heterodimer with a related family member. Interacts with SIX1. In terms of tissue distribution, in adult expressed in olfactory epithelium and at a much lower level in Purkinje cells of the cerebellum. In embryo expressed in epithalamus, in cells near the ventricular zone of mesencephalon and on the ventral surface of rhombencephalon, in the developing vomeronasal organ, at a lower level in developing spinal cord. Not expressed in developing retina, inner ear, dorsal root ganglia, trigeminal ganglia and glossopharyngeal ganglia.

It is found in the nucleus. Its function is as follows. Transcription factor that, in osteoblasts, activates the decoy receptor for RANKL, TNFRSF11B, which in turn regulates osteoclast differentiation. Acts in synergy with the Wnt-responsive LEF1/CTNNB1 pathway. Recognizes variations of the palindromic sequence 5'-ATTCCCNNGGGAATT-3'. The protein is Transcription factor COE2 (Ebf2) of Mus musculus (Mouse).